We begin with the raw amino-acid sequence, 170 residues long: Allophycocyanin subunit beta-18 (170 aa).

At Asn-74 the chain carries N4-methylasparagine. Cys-84 is a binding site for (2R,3E)-phycocyanobilin.

This sequence belongs to the phycobiliprotein family. As to quaternary structure, heterodimer of an alpha and a beta chain. Post-translationally, contains one covalently linked bilin chromophore.

The protein resides in the plastid. The protein localises to the chloroplast thylakoid membrane. Functionally, light-harvesting photosynthetic bile pigment-protein from the phycobiliprotein complex. Allophycocyanin has a maximum absorption at approximately 650 nanometers. This Cyanidium caldarium (Red alga) protein is Allophycocyanin subunit beta-18 (apcF).